The primary structure comprises 596 residues: ATP-binding protein Uup (596 aa).

2 ABC transporter domains span residues M1–K222 and F290–N516. ATP-binding positions include G36–S43 and G322–S329. The C-terminal domain (CTD), binds DNA stretch occupies residues I519–I596.

Belongs to the ABC transporter superfamily. ABCF family. Uup subfamily.

It localises to the cytoplasm. The enzyme catalyses ATP + H2O = ADP + phosphate + H(+). Probably plays a role in ribosome assembly or function. May be involved in resolution of branched DNA intermediates that result from template switching in postreplication gaps. Binds DNA and has ATPase activity. The polypeptide is ATP-binding protein Uup (Buchnera aphidicola subsp. Acyrthosiphon pisum (strain APS) (Acyrthosiphon pisum symbiotic bacterium)).